The primary structure comprises 1146 residues: Error-prone DNA polymerase (1146 aa).

Disordered stretches follow at residues 1 to 43 and 154 to 178; these read MGWG…WSRK and ATPEFEHAAAPDSAPRTGEPDPPGP. Positions 12–26 are enriched in basic and acidic residues; sequence ELERVLSGRPGRTDP.

Belongs to the DNA polymerase type-C family. DnaE2 subfamily.

It is found in the cytoplasm. The enzyme catalyses DNA(n) + a 2'-deoxyribonucleoside 5'-triphosphate = DNA(n+1) + diphosphate. DNA polymerase involved in damage-induced mutagenesis and translesion synthesis (TLS). It is not the major replicative DNA polymerase. In Nocardia farcinica (strain IFM 10152), this protein is Error-prone DNA polymerase.